A 476-amino-acid chain; its full sequence is Bifunctional protein HldE (476 aa).

The ribokinase stretch occupies residues 1 to 318 (MAQYSAEFKQ…ENAIHARPET (318 aa)). 195–198 (NMSE) contributes to the ATP binding site. D264 is an active-site residue. A cytidylyltransferase region spans residues 344–476 (MTNGCFDILH…VIEKIKLLKD (133 aa)).

This sequence in the N-terminal section; belongs to the carbohydrate kinase PfkB family. The protein in the C-terminal section; belongs to the cytidylyltransferase family. Homodimer.

The catalysed reaction is D-glycero-beta-D-manno-heptose 7-phosphate + ATP = D-glycero-beta-D-manno-heptose 1,7-bisphosphate + ADP + H(+). The enzyme catalyses D-glycero-beta-D-manno-heptose 1-phosphate + ATP + H(+) = ADP-D-glycero-beta-D-manno-heptose + diphosphate. Its pathway is nucleotide-sugar biosynthesis; ADP-L-glycero-beta-D-manno-heptose biosynthesis; ADP-L-glycero-beta-D-manno-heptose from D-glycero-beta-D-manno-heptose 7-phosphate: step 1/4. The protein operates within nucleotide-sugar biosynthesis; ADP-L-glycero-beta-D-manno-heptose biosynthesis; ADP-L-glycero-beta-D-manno-heptose from D-glycero-beta-D-manno-heptose 7-phosphate: step 3/4. Catalyzes the phosphorylation of D-glycero-D-manno-heptose 7-phosphate at the C-1 position to selectively form D-glycero-beta-D-manno-heptose-1,7-bisphosphate. Functionally, catalyzes the ADP transfer from ATP to D-glycero-beta-D-manno-heptose 1-phosphate, yielding ADP-D-glycero-beta-D-manno-heptose. The chain is Bifunctional protein HldE from Haemophilus influenzae (strain 86-028NP).